A 47-amino-acid polypeptide reads, in one-letter code: Trifunctional NAD biosynthesis/regulator protein NadR (47 aa).

The HTH cro/C1-type domain occupies 7 to 47; sequence LKSAIKQKGCTLDEVAEPSGMTKGYLSQLLNRKIKARARRS. Positions 18-37 form a DNA-binding region, H-T-H motif; the sequence is LDEVAEPSGMTKGYLSQLLN.

It localises to the cell membrane. Its subcellular location is the cytoplasm. It carries out the reaction beta-nicotinamide D-ribonucleotide + ATP + H(+) = diphosphate + NAD(+). The enzyme catalyses beta-nicotinamide D-riboside + ATP = beta-nicotinamide D-ribonucleotide + ADP + H(+). It participates in cofactor biosynthesis; NAD(+) biosynthesis [regulation]. Its pathway is cofactor biosynthesis; NAD(+) biosynthesis; NAD(+) from nicotinamide D-ribonucleotide: step 1/1. Functionally, this enzyme has three activities: DNA binding, nicotinamide mononucleotide (NMN) adenylyltransferase and ribosylnicotinamide (RN) kinase. The DNA-binding domain binds to the nadB operator sequence in an NAD- and ATP-dependent manner. As NAD levels increase within the cell, the affinity of NadR for the nadB operator regions of nadA, nadB, and pncB increases, repressing the transcription of these genes. The RN kinase activity catalyzes the phosphorylation of RN to form nicotinamide ribonucleotide. The NMN adenylyltransferase activity catalyzes the transfer of the AMP moiety of ATP to nicotinamide ribonucleotide to form NAD(+). The NMN adenylyltransferase domain also functions as the NAD and ATP sensor. The chain is Trifunctional NAD biosynthesis/regulator protein NadR (nadR) from Klebsiella pneumoniae.